A 209-amino-acid polypeptide reads, in one-letter code: Uracil phosphoribosyltransferase (209 aa).

Residues Arg-79, Arg-104, and 131-139 contribute to the 5-phospho-alpha-D-ribose 1-diphosphate site; that span reads DPMLATGGS. Uracil-binding positions include Ile-194 and 199–201; that span reads GDA. 5-phospho-alpha-D-ribose 1-diphosphate is bound at residue Asp-200.

It belongs to the UPRTase family. The cofactor is Mg(2+).

The enzyme catalyses UMP + diphosphate = 5-phospho-alpha-D-ribose 1-diphosphate + uracil. It functions in the pathway pyrimidine metabolism; UMP biosynthesis via salvage pathway; UMP from uracil: step 1/1. With respect to regulation, allosterically activated by GTP. Functionally, catalyzes the conversion of uracil and 5-phospho-alpha-D-ribose 1-diphosphate (PRPP) to UMP and diphosphate. The polypeptide is Uracil phosphoribosyltransferase (Clostridium acetobutylicum (strain ATCC 824 / DSM 792 / JCM 1419 / IAM 19013 / LMG 5710 / NBRC 13948 / NRRL B-527 / VKM B-1787 / 2291 / W)).